Here is a 145-residue protein sequence, read N- to C-terminus: I-leader protein (145 aa).

It is found in the host cytoplasm. The protein resides in the host perinuclear region. This is I-leader protein from Human adenovirus C serotype 2 (HAdV-2).